We begin with the raw amino-acid sequence, 103 residues long: Phosphoribosyl-ATP pyrophosphatase (103 aa).

This sequence belongs to the PRA-PH family.

The protein resides in the cytoplasm. It carries out the reaction 1-(5-phospho-beta-D-ribosyl)-ATP + H2O = 1-(5-phospho-beta-D-ribosyl)-5'-AMP + diphosphate + H(+). It participates in amino-acid biosynthesis; L-histidine biosynthesis; L-histidine from 5-phospho-alpha-D-ribose 1-diphosphate: step 2/9. The sequence is that of Phosphoribosyl-ATP pyrophosphatase from Listeria monocytogenes serotype 4a (strain HCC23).